The sequence spans 126 residues: Small ribosomal subunit protein uS12 (126 aa).

The segment at 1–28 (MPTINQLVRKGRQSETTKSKSPALQDCP) is disordered. Aspartate 89 is modified (3-methylthioaspartic acid). Residues 103 to 126 (DTQGVKDRKQARSKYGAKRAKAGK) are disordered. Positions 113–126 (ARSKYGAKRAKAGK) are enriched in basic residues.

It belongs to the universal ribosomal protein uS12 family. Part of the 30S ribosomal subunit. Contacts proteins S8 and S17. May interact with IF1 in the 30S initiation complex.

Its function is as follows. With S4 and S5 plays an important role in translational accuracy. In terms of biological role, interacts with and stabilizes bases of the 16S rRNA that are involved in tRNA selection in the A site and with the mRNA backbone. Located at the interface of the 30S and 50S subunits, it traverses the body of the 30S subunit contacting proteins on the other side and probably holding the rRNA structure together. The combined cluster of proteins S8, S12 and S17 appears to hold together the shoulder and platform of the 30S subunit. This Paraburkholderia phytofirmans (strain DSM 17436 / LMG 22146 / PsJN) (Burkholderia phytofirmans) protein is Small ribosomal subunit protein uS12.